A 228-amino-acid polypeptide reads, in one-letter code: HTH-type transcriptional repressor RspR (228 aa).

An HTH gntR-type domain is found at 11-78 (QPVNQQIYRI…PQRGSYVNKI (68 aa)). Positions 38 to 57 (EKEVSVRFNVSRQPVREAFI) form a DNA-binding region, H-T-H motif.

Its function is as follows. Repressor of the rspAB operon. Acts by binding directly to the upstream region of rspA. The sequence is that of HTH-type transcriptional repressor RspR (rspR) from Escherichia coli (strain K12).